Consider the following 722-residue polypeptide: G2-specific protein kinase fin1 (722 aa).

Residues 4–281 (YKILECIGHG…TYQLLRSPIL (278 aa)) enclose the Protein kinase domain. Residues 10–18 (IGHGSFGRI) and K33 each bind ATP. D151 acts as the Proton acceptor in catalysis. A disordered region spans residues 528–557 (LSVESDETAVSASSGESVPTDSTLTDTKSK). Over residues 535–546 (TAVSASSGESVP) the composition is skewed to polar residues.

This sequence belongs to the protein kinase superfamily. Ser/Thr protein kinase family. NIMA subfamily.

It is found in the cytoplasm. It localises to the cytoskeleton. The protein localises to the microtubule organizing center. Its subcellular location is the spindle pole body. It carries out the reaction L-seryl-[protein] + ATP = O-phospho-L-seryl-[protein] + ADP + H(+). The enzyme catalyses L-threonyl-[protein] + ATP = O-phospho-L-threonyl-[protein] + ADP + H(+). Promotes chromosome condensation and nuclear envelope dynamics during mitosis. Activity appears at metaphase-anaphase transition. The sequence is that of G2-specific protein kinase fin1 (fin1) from Schizosaccharomyces pombe (strain 972 / ATCC 24843) (Fission yeast).